A 231-amino-acid chain; its full sequence is Probable pyridoxamine 5'-phosphate oxidase (231 aa).

20-23 (QYEK) contributes to the pyridoxal 5'-phosphate binding site. 74–77 (RLVL) lines the FMN pocket. A pyridoxal 5'-phosphate-binding site is contributed by Lys79. FMN is bound by residues 89 to 90 (FT), 96 to 97 (KK), and Gln119. Positions 137, 141, and 145 each coordinate pyridoxal 5'-phosphate. FMN contacts are provided by residues 154–155 (QS) and Trp202. Residue 208–210 (RLH) participates in pyridoxal 5'-phosphate binding. Residue Arg212 coordinates FMN.

This sequence belongs to the pyridoxamine 5'-phosphate oxidase family. In terms of assembly, homodimer. FMN serves as cofactor.

It catalyses the reaction pyridoxamine 5'-phosphate + O2 + H2O = pyridoxal 5'-phosphate + H2O2 + NH4(+). The enzyme catalyses pyridoxine 5'-phosphate + O2 = pyridoxal 5'-phosphate + H2O2. It participates in cofactor metabolism; pyridoxal 5'-phosphate salvage; pyridoxal 5'-phosphate from pyridoxamine 5'-phosphate: step 1/1. It functions in the pathway cofactor metabolism; pyridoxal 5'-phosphate salvage; pyridoxal 5'-phosphate from pyridoxine 5'-phosphate: step 1/1. Its function is as follows. Catalyzes the oxidation of either pyridoxine 5'-phosphate (PNP) or pyridoxamine 5'-phosphate (PMP) into pyridoxal 5'-phosphate (PLP). This is Probable pyridoxamine 5'-phosphate oxidase from Schizosaccharomyces pombe (strain 972 / ATCC 24843) (Fission yeast).